Consider the following 256-residue polypeptide: L-rhamnose 1-dehydrogenase (NAD(P)(+)) (256 aa).

NADP(+) is bound by residues G12, S14, R15, I17, S37, D66, A67, and N93. S146 acts as the Proton donor in catalysis. 4 residues coordinate beta-L-rhamnose: S146, S148, Q156, and Y159. The NADP(+) site is built by Y159 and K163. The active-site Proton acceptor is the Y159. K163 (lowers pKa of active site Tyr) is an active-site residue. Residue T191 participates in beta-L-rhamnose binding. I192 provides a ligand contact to NADP(+). N197 contacts beta-L-rhamnose.

It belongs to the short-chain dehydrogenases/reductases (SDR) family.

The catalysed reaction is L-rhamnofuranose + NAD(+) = L-rhamnono-1,4-lactone + NADH + H(+). The enzyme catalyses L-rhamnofuranose + NADP(+) = L-rhamnono-1,4-lactone + NADPH + H(+). The protein operates within carbohydrate degradation; L-rhamnose degradation. Its function is as follows. NAD(P)-dependent dehydrogenase that catalyzes the oxidation of L-rhamnose to L-rhamnono-1,4-lactone. Also shows high activity with L-lyxose and low activity with L-mannose and L-fucose. Can utilize either NAD(+) or NADP(+), with a strong preference for NADP(+). Catalyzes the first step in an alternative pathway for rhamnose utilization that does not involve phosphorylated intermediates. The sequence is that of L-rhamnose 1-dehydrogenase (NAD(P)(+)) from Azotobacter vinelandii (strain DJ / ATCC BAA-1303).